Reading from the N-terminus, the 291-residue chain is UPF0276 protein VV3194 (291 aa).

This sequence belongs to the UPF0276 family.

This Vibrio vulnificus (strain YJ016) protein is UPF0276 protein VV3194.